A 282-amino-acid chain; its full sequence is Energy-coupling factor transporter ATP-binding protein EcfA1 (282 aa).

The region spanning 9–243 (IEIDNLSFKY…NDELLNIGLD (235 aa)) is the ABC transporter domain. 43–50 (GHNGSGKS) contacts ATP.

Belongs to the ABC transporter superfamily. Energy-coupling factor EcfA family. Forms a stable energy-coupling factor (ECF) transporter complex composed of 2 membrane-embedded substrate-binding proteins (S component), 2 ATP-binding proteins (A component) and 2 transmembrane proteins (T component).

It localises to the cell membrane. ATP-binding (A) component of a common energy-coupling factor (ECF) ABC-transporter complex. Unlike classic ABC transporters this ECF transporter provides the energy necessary to transport a number of different substrates. This is Energy-coupling factor transporter ATP-binding protein EcfA1 from Ligilactobacillus salivarius (strain UCC118) (Lactobacillus salivarius).